Reading from the N-terminus, the 458-residue chain is Elongation factor 1-alpha (458 aa).

Gly2 is modified (n,N,N-trimethylglycine). Lys3 bears the N6,N6-dimethyllysine; alternate mark. N6-methyllysine; alternate is present on Lys3. A tr-type G domain is found at 5 to 240 (KTHVNVVVIG…DAIEPPQRPT (236 aa)). Residues 14–21 (GHVDSGKS) form a G1 region. 14 to 21 (GHVDSGKS) contacts GTP. Lys30 carries the N6-methyllysine modification. Residues 70 to 74 (GITID) form a G2 region. Lys79 carries the post-translational modification N6,N6,N6-trimethyllysine. The G3 stretch occupies residues 91–94 (DAPG). GTP is bound by residues 91–95 (DAPGH) and 153–156 (NKMD). The interval 153 to 156 (NKMD) is G4. The tract at residues 192 to 194 (SGW) is G5. Lys316 is subject to N6,N6-dimethyllysine; alternate. N6-methyllysine; alternate is present on Lys316. Lys390 is modified (N6-methyllysine).

The protein belongs to the TRAFAC class translation factor GTPase superfamily. Classic translation factor GTPase family. EF-Tu/EF-1A subfamily.

It is found in the cytoplasm. It functions in the pathway protein biosynthesis; polypeptide chain elongation. In terms of biological role, this protein promotes the GTP-dependent binding of aminoacyl-tRNA to the A-site of ribosomes during protein biosynthesis. The polypeptide is Elongation factor 1-alpha (TEF1) (Meyerozyma guilliermondii (strain ATCC 6260 / CBS 566 / DSM 6381 / JCM 1539 / NBRC 10279 / NRRL Y-324) (Yeast)).